Here is a 149-residue protein sequence, read N- to C-terminus: D-aminoacyl-tRNA deacylase (149 aa).

The Gly-cisPro motif, important for rejection of L-amino acids signature appears at 137–138; the sequence is GP.

It belongs to the DTD family. As to quaternary structure, homodimer.

The protein resides in the cytoplasm. The enzyme catalyses glycyl-tRNA(Ala) + H2O = tRNA(Ala) + glycine + H(+). It catalyses the reaction a D-aminoacyl-tRNA + H2O = a tRNA + a D-alpha-amino acid + H(+). Its function is as follows. An aminoacyl-tRNA editing enzyme that deacylates mischarged D-aminoacyl-tRNAs. Also deacylates mischarged glycyl-tRNA(Ala), protecting cells against glycine mischarging by AlaRS. Acts via tRNA-based rather than protein-based catalysis; rejects L-amino acids rather than detecting D-amino acids in the active site. By recycling D-aminoacyl-tRNA to D-amino acids and free tRNA molecules, this enzyme counteracts the toxicity associated with the formation of D-aminoacyl-tRNA entities in vivo and helps enforce protein L-homochirality. This Clostridium botulinum (strain Kyoto / Type A2) protein is D-aminoacyl-tRNA deacylase.